Reading from the N-terminus, the 154-residue chain is Ribosome maturation factor RimP (154 aa).

Belongs to the RimP family.

It is found in the cytoplasm. In terms of biological role, required for maturation of 30S ribosomal subunits. In Clostridium novyi (strain NT), this protein is Ribosome maturation factor RimP.